The following is a 122-amino-acid chain: Acidic phospholipase A2 A' (122 aa).

Intrachain disulfides connect C26/C115, C28/C44, C43/C95, C49/C122, C50/C88, C57/C81, and C75/C86. The Ca(2+) site is built by Y27, G29, and G31. The active site involves H47. D48 lines the Ca(2+) pocket. D89 is an active-site residue.

The protein belongs to the phospholipase A2 family. Group II subfamily. D49 sub-subfamily. Ca(2+) is required as a cofactor. In terms of tissue distribution, expressed by the venom gland.

It localises to the secreted. The catalysed reaction is a 1,2-diacyl-sn-glycero-3-phosphocholine + H2O = a 1-acyl-sn-glycero-3-phosphocholine + a fatty acid + H(+). Functionally, PLA2 catalyzes the calcium-dependent hydrolysis of the 2-acyl groups in 3-sn-phosphoglycerides. This chain is Acidic phospholipase A2 A', found in Gloydius halys (Chinese water mocassin).